Consider the following 468-residue polypeptide: Serine/threonine-protein phosphatase 2A 55 kDa regulatory subunit B beta isoform (468 aa).

7 WD repeats span residues 47 to 86 (SSAD…KNQP), 112 to 153 (EIEE…KRPE), 196 to 234 (AHTY…RSFN), 245 to 285 (ELTE…LCDK), 304 to 342 (EIIS…RPIE), 359 to 400 (ENDC…DVTL), and 435 to 468 (DFSK…DKVN).

The protein belongs to the phosphatase 2A regulatory subunit B family. As to quaternary structure, PP2A consists of a common heterodimeric core enzyme, composed of a 36 kDa catalytic subunit (subunit C) and a 65 kDa constant regulatory subunit (PR65 or subunit A), that associates with a variety of regulatory subunits.

The protein localises to the cytoplasm. It localises to the cytoskeleton. The protein resides in the membrane. Functionally, the B regulatory subunit might modulate substrate selectivity and catalytic activity, and might also direct the localization of the catalytic enzyme to a particular subcellular compartment. Negatively controls the initiation of oocyte maturation. The polypeptide is Serine/threonine-protein phosphatase 2A 55 kDa regulatory subunit B beta isoform (ppp2r2b) (Xenopus laevis (African clawed frog)).